The sequence spans 153 residues: Nucleoside diphosphate kinase (153 aa).

ATP contacts are provided by Lys-11, Phe-59, Arg-87, Thr-93, Arg-104, and Asn-114. His-117 functions as the Pros-phosphohistidine intermediate in the catalytic mechanism.

Belongs to the NDK family. In terms of assembly, homotrimer. Mg(2+) serves as cofactor.

The enzyme catalyses a 2'-deoxyribonucleoside 5'-diphosphate + ATP = a 2'-deoxyribonucleoside 5'-triphosphate + ADP. The catalysed reaction is a ribonucleoside 5'-diphosphate + ATP = a ribonucleoside 5'-triphosphate + ADP. Functionally, major role in the synthesis of nucleoside triphosphates other than ATP. The ATP gamma phosphate is transferred to the NDP beta phosphate via a ping-pong mechanism, using a phosphorylated active-site intermediate. The sequence is that of Nucleoside diphosphate kinase (ndk1) from Aspergillus fumigatus (strain ATCC MYA-4609 / CBS 101355 / FGSC A1100 / Af293) (Neosartorya fumigata).